The sequence spans 795 residues: Lon protease (795 aa).

The 198-residue stretch at Tyr17–Ile214 folds into the Lon N-terminal domain. Gly370 to Thr377 serves as a coordination point for ATP. A Lon proteolytic domain is found at Lys605–Arg787. Catalysis depends on residues Ser692 and Lys735.

The protein belongs to the peptidase S16 family. In terms of assembly, homohexamer. Organized in a ring with a central cavity.

The protein resides in the cytoplasm. It catalyses the reaction Hydrolysis of proteins in presence of ATP.. Functionally, ATP-dependent serine protease that mediates the selective degradation of mutant and abnormal proteins as well as certain short-lived regulatory proteins. Required for cellular homeostasis and for survival from DNA damage and developmental changes induced by stress. Degrades polypeptides processively to yield small peptide fragments that are 5 to 10 amino acids long. Binds to DNA in a double-stranded, site-specific manner. The chain is Lon protease from Aquifex aeolicus (strain VF5).